Reading from the N-terminus, the 129-residue chain is Glycine cleavage system H protein 2 (129 aa).

One can recognise a Lipoyl-binding domain in the interval 24–105 (SVTVGISDHA…PYVSWFFKLK (82 aa)). N6-lipoyllysine is present on Lys65.

This sequence belongs to the GcvH family. In terms of assembly, the glycine cleavage system is composed of four proteins: P, T, L and H. The cofactor is (R)-lipoate.

Functionally, the glycine cleavage system catalyzes the degradation of glycine. The H protein shuttles the methylamine group of glycine from the P protein to the T protein. The protein is Glycine cleavage system H protein 2 of Pseudomonas aeruginosa (strain ATCC 15692 / DSM 22644 / CIP 104116 / JCM 14847 / LMG 12228 / 1C / PRS 101 / PAO1).